Reading from the N-terminus, the 37-residue chain is DLHIPPPDNKINWPQLSGGGGGSPKTGYDININAQQK.

The tract at residues 1 to 37 (DLHIPPPDNKINWPQLSGGGGGSPKTGYDININAQQK) is disordered.

Belongs to the attacin/sarcotoxin-2 family. As to expression, synthesized by the fat body and secreted into the hemolymph.

Its subcellular location is the secreted. Its function is as follows. Acute phase protein with antibacterial activity against the Gram-negative bacteria E.coli (MIC=6.25 ug/ml) and S.sonnei (MIC=12.5 ug/ml). Lacks antibacterial activity against the Gram-negative bacteria P.vulgaris, P.rettgeri and P.aeruginosa, and against the Gram-positive bacteria B.subtilis, S.aureus, M.luteus, B.megaterium, C.bovis and E.cloacae. This Sarcophaga peregrina (Flesh fly) protein is Diptericin.